A 147-amino-acid polypeptide reads, in one-letter code: DNA-directed RNA polymerase RPB6 homolog (147 aa).

The protein belongs to the archaeal RpoK/eukaryotic RPB6 RNA polymerase subunit family. In terms of assembly, part of the viral DNA-directed RNA polymerase that consists of 8 polII-like subunits (RPB1, RPB2, RPB3, RPB5, RPB6, RPB7, RPB9, RPB10), a capping enzyme and a termination factor.

The protein localises to the host cytoplasm. It localises to the virion. Its function is as follows. Component of the DNA-directed RNA polymerase (RNAP) that catalyzes the transcription in the cytoplasm of viral DNA into RNA using the four ribonucleoside triphosphates as substrates. The sequence is that of DNA-directed RNA polymerase RPB6 homolog from Ornithodoros (relapsing fever ticks).